The following is a 205-amino-acid chain: Glycerol-3-phosphate acyltransferase (205 aa).

5 helical membrane-spanning segments follow: residues 4–24 (IAPGMILFAYLCGSISSAILV), 56–76 (VAVLIFDVLKGMLPVWGAYAL), 81–101 (FWLGLIAIAACLGHIWPVFFG), 112–132 (FGAIAPIGWDLTGVMAGTWLL), and 138–158 (GYSSLGAIVSALIAPFYVWWF).

This sequence belongs to the PlsY family. In terms of assembly, probably interacts with PlsX.

It is found in the cell inner membrane. It catalyses the reaction an acyl phosphate + sn-glycerol 3-phosphate = a 1-acyl-sn-glycero-3-phosphate + phosphate. The protein operates within lipid metabolism; phospholipid metabolism. Functionally, catalyzes the transfer of an acyl group from acyl-phosphate (acyl-PO(4)) to glycerol-3-phosphate (G3P) to form lysophosphatidic acid (LPA). This enzyme utilizes acyl-phosphate as fatty acyl donor, but not acyl-CoA or acyl-ACP. This Citrobacter koseri (strain ATCC BAA-895 / CDC 4225-83 / SGSC4696) protein is Glycerol-3-phosphate acyltransferase.